Reading from the N-terminus, the 584-residue chain is Segmentation polarity homeobox protein engrailed (584 aa).

Disordered regions lie at residues 1-27 (MALEDRCSPQSAPSPPGCLPHSPPQQH), 141-198 (EESD…SKPS), 343-380 (IGQAQSTTPVTTPSSRPSQLASPPPASNASTISSSSST), 392-451 (CSSA…GGKN), and 465-492 (DRPSSGPRYRRPKQPKDKTNDEKRPRTA). Residues 12 to 23 (APSPPGCLPHSP) are compositionally biased toward pro residues. Positions 160–174 (TEEDEEEDDDIDVDD) are enriched in acidic residues. The span at 189–198 (HQQSKQSKPS) shows a compositional bias: polar residues. Low complexity-rich tracts occupy residues 348–380 (STTPVTTPSSRPSQLASPPPASNASTISSSSST) and 392–405 (CSSAASSLNSSPSS). Residues 478–489 (QPKDKTNDEKRP) show a composition bias toward basic and acidic residues. The segment at residues 486–545 (EKRPRTAFSSEQLARLKREFNENRYLTERRRQQLSSELGLNEAQIKIWFQNKRAKIKKST) is a DNA-binding region (homeobox).

The protein belongs to the engrailed homeobox family.

Its subcellular location is the nucleus. This protein specifies the body segmentation pattern. It is required for the development of the central nervous system. Transcriptional regulator that repress activated promoters. This chain is Segmentation polarity homeobox protein engrailed (en), found in Drosophila virilis (Fruit fly).